The following is a 1020-amino-acid chain: Valine--tRNA ligase (1020 aa).

Positions Pro-45 to His-55 match the 'HIGH' region motif. Positions Lys-661 to Thr-665 match the 'KMSKS' region motif. Lys-664 contributes to the ATP binding site. Residues Ala-955–Gly-1020 are a coiled coil.

This sequence belongs to the class-I aminoacyl-tRNA synthetase family. ValS type 1 subfamily. Monomer.

It localises to the cytoplasm. The enzyme catalyses tRNA(Val) + L-valine + ATP = L-valyl-tRNA(Val) + AMP + diphosphate. Functionally, catalyzes the attachment of valine to tRNA(Val). As ValRS can inadvertently accommodate and process structurally similar amino acids such as threonine, to avoid such errors, it has a 'posttransfer' editing activity that hydrolyzes mischarged Thr-tRNA(Val) in a tRNA-dependent manner. This Ruegeria pomeroyi (strain ATCC 700808 / DSM 15171 / DSS-3) (Silicibacter pomeroyi) protein is Valine--tRNA ligase.